We begin with the raw amino-acid sequence, 468 residues long: Probable citrate synthase, mitochondrial (468 aa).

Active-site residues include H303, H349, and D404.

This sequence belongs to the citrate synthase family. In terms of assembly, homodimer.

The protein localises to the mitochondrion matrix. The enzyme catalyses oxaloacetate + acetyl-CoA + H2O = citrate + CoA + H(+). Its pathway is carbohydrate metabolism; tricarboxylic acid cycle; isocitrate from oxaloacetate: step 1/2. This is Probable citrate synthase, mitochondrial (cts-1) from Caenorhabditis elegans.